A 353-amino-acid chain; its full sequence is Melanin-concentrating hormone receptor 1 (353 aa).

The tract at residues 1 to 31 is disordered; that stretch reads MDLEASLLPTGPNTSNTSDGPDNLTSAGSPP. The Extracellular segment spans residues 1–45; sequence MDLEASLLPTGPNTSNTSDGPDNLTSAGSPPRSGSVSYINIIMPS. Residues 11-31 show a composition bias toward polar residues; it reads GPNTSNTSDGPDNLTSAGSPP. 3 N-linked (GlcNAc...) asparagine glycosylation sites follow: N13, N16, and N23. A helical transmembrane segment spans residues 46 to 66; sequence VFGTICLLGIIGNSMVIFAVV. Over 67 to 79 the chain is Cytoplasmic; sequence KKSKLHWCNNVPD. The chain crosses the membrane as a helical span at residues 80–100; it reads IFIINLSVVDLLFLLGMPFMI. Over 101–118 the chain is Extracellular; that stretch reads HQLMGNGVWHFGETMCTL. C116 and C194 are disulfide-bonded. Residues 119–139 form a helical membrane-spanning segment; sequence ITAMDANSQFTSTYILTAMAI. The Cytoplasmic portion of the chain corresponds to 140-161; it reads DRYLATVHPISSTKFRKPSVAT. A helical membrane pass occupies residues 162–182; that stretch reads LVICLLWALSFISITPVWLYA. Topologically, residues 183–204 are extracellular; sequence RLIPFPGGAVGCGIRLPNPDTD. The helical transmembrane segment at 205-225 threads the bilayer; that stretch reads LYWFTLYQFFLAFALPFVVIT. The Cytoplasmic portion of the chain corresponds to 226-257; it reads AAYVRILQRMTSSVAPASQRSIRLRTKRVTRT. The helical transmembrane segment at 258-278 threads the bilayer; that stretch reads AIAICLVFFVCWAPYYVLQLT. Topologically, residues 279-294 are extracellular; that stretch reads QLSISRPTLTFVYLYN. A helical transmembrane segment spans residues 295–315; that stretch reads AAISLGYANSCLNPFVYIVLC. Residues 316 to 353 are Cytoplasmic-facing; sequence ETFRKRLVLSVKPAAQGQLRAVSNAQTADEERTESKGT.

The protein belongs to the G-protein coupled receptor 1 family. In terms of assembly, interacts with NCDN.

It localises to the cell membrane. Functionally, receptor for melanin-concentrating hormone, coupled to both G proteins that inhibit adenylyl cyclase and G proteins that activate phosphoinositide hydrolysis. In Macaca mulatta (Rhesus macaque), this protein is Melanin-concentrating hormone receptor 1.